A 619-amino-acid chain; its full sequence is Dihydroxy-acid dehydratase (619 aa).

Position 81 (Asp81) interacts with Mg(2+). [2Fe-2S] cluster is bound at residue Cys122. Mg(2+)-binding residues include Asp123 and Lys124. An N6-carboxylysine modification is found at Lys124. Cys195 is a [2Fe-2S] cluster binding site. Residue Glu494 participates in Mg(2+) binding. Ser520 serves as the catalytic Proton acceptor.

Belongs to the IlvD/Edd family. In terms of assembly, homodimer. [2Fe-2S] cluster is required as a cofactor. The cofactor is Mg(2+).

The catalysed reaction is (2R)-2,3-dihydroxy-3-methylbutanoate = 3-methyl-2-oxobutanoate + H2O. The enzyme catalyses (2R,3R)-2,3-dihydroxy-3-methylpentanoate = (S)-3-methyl-2-oxopentanoate + H2O. Its pathway is amino-acid biosynthesis; L-isoleucine biosynthesis; L-isoleucine from 2-oxobutanoate: step 3/4. The protein operates within amino-acid biosynthesis; L-valine biosynthesis; L-valine from pyruvate: step 3/4. Functionally, functions in the biosynthesis of branched-chain amino acids. Catalyzes the dehydration of (2R,3R)-2,3-dihydroxy-3-methylpentanoate (2,3-dihydroxy-3-methylvalerate) into 2-oxo-3-methylpentanoate (2-oxo-3-methylvalerate) and of (2R)-2,3-dihydroxy-3-methylbutanoate (2,3-dihydroxyisovalerate) into 2-oxo-3-methylbutanoate (2-oxoisovalerate), the penultimate precursor to L-isoleucine and L-valine, respectively. The sequence is that of Dihydroxy-acid dehydratase from Shewanella putrefaciens (strain CN-32 / ATCC BAA-453).